A 254-amino-acid chain; its full sequence is Putative electron transfer flavoprotein subunit YdiQ (254 aa).

This sequence belongs to the ETF beta-subunit/FixA family. As to quaternary structure, ydiR and YdiQ form a heterodimer.

May play a role in a redox process. The chain is Putative electron transfer flavoprotein subunit YdiQ (ydiQ) from Escherichia coli (strain K12).